Here is a 580-residue protein sequence, read N- to C-terminus: Nucleolar protein 58 (580 aa).

The Nop domain occupies Ile285 to Gly410. Residues Asp444 to Glu580 form a disordered region. Acidic residues predominate over residues Glu465–Glu487. Composition is skewed to basic and acidic residues over residues Ser495–Glu505 and Lys547–Asp562. Over residues Lys570 to Glu580 the composition is skewed to basic residues.

The protein belongs to the NOP5/NOP56 family.

The protein resides in the nucleus. It is found in the nucleolus. Functionally, required for pre-18S rRNA processing. May bind microtubules. The sequence is that of Nucleolar protein 58 (nop58) from Aspergillus niger (strain ATCC MYA-4892 / CBS 513.88 / FGSC A1513).